Consider the following 515-residue polypeptide: MGQVIGFFQSLPEIINEALNIALICVALLATIKGMVNIWKSGLIQLLFFLTLAGRSCSHSFTIGRFHEFQSVTVNFTQFMSYAPSSCSVNNTHHYFKGPQNTTWGLELTLTNESMINITNSMRVFTNIHHNVTNCVQNISEHEGVLKWLLETMHLSISKPGKHIAPVMCERQKGLLIEYNLTMTKDHHPNYWNQVLYGLAKLLGSSKRLWFGACNKADCQMQSDHQHIKCNYSNCKGYTSFKYLIIQNTTWENHCEYNHLNTIHLLMSPIGQSFITRRLQAFLTWTLSDALGNDLPGGYCLEQWAVVWFGIKCFDNTAMAKCNQNHDSEFCDMLRLFDYNRNAIQSLNDQSQARLNLLTNTINSLVSDNLLMKNKLRELMNVPYCNYTRFWFINDTKNGRHTLPQCWLVSDGSYLNETRFRTQWLSESNSLYTEMLTEEYEKRQGRTPLSLVDLCFWSTLFYISTLFAHLVGFPTHRHLIGEGCPKPHRLTGSGICSCGHYGIPGKPVRWTKMSR.

The N-myristoyl glycine; by host moiety is linked to residue Gly2. Over 2–17 (GQVIGFFQSLPEIINE) the chain is Extracellular. Residues 18–33 (ALNIALICVALLATIK) traverse the membrane as a helical segment. The Cytoplasmic segment spans residues 34 to 58 (GMVNIWKSGLIQLLFFLTLAGRSCS). Cys57 contributes to the Zn(2+) binding site. Residues 59-453 (HSFTIGRFHE…QGRTPLSLVD (395 aa)) are Extracellular-facing. 4 cysteine pairs are disulfide-bonded: Cys87-Cys255, Cys300-Cys313, Cys322-Cys331, and Cys385-Cys406. Residues Asn90, Asn112, Asn127, Asn180, and Asn248 are each glycosylated (N-linked (GlcNAc...) asparagine; by host). 3 N-linked (GlcNAc...) asparagine; by host glycosylation sites follow: Asn386, Asn394, and Asn416. Residues 454-474 (LCFWSTLFYISTLFAHLVGFP) form a helical membrane-spanning segment. Residues 475–515 (THRHLIGEGCPKPHRLTGSGICSCGHYGIPGKPVRWTKMSR) are Cytoplasmic-facing. Residues His476, His478, Cys484, His488, Cys496, and Cys498 each contribute to the Zn(2+) site.

This sequence belongs to the arenaviridae GPC protein family. As to quaternary structure, interacts with glycoprotein G2. Part of the GP complex (GP-C) together with glycoprotein G1 and glycoprotein G2. The GP-complex interacts with protein Z, which interacts with ribonucleocapsid; these interactions may induce virion budding. Homotrimer; disulfide-linked. In pre-fusion state, G1 homotrimers bind G2 homotrimers via ionic interactions. Part of the GP complex (GP-C) together with glycoprotein G2 and the stable signal peptide. The GP-complex interacts with protein Z, which interacts with ribonucleocapsid; these interactions may induce virion budding. In terms of assembly, homotrimer. Interacts with the stable signal peptide. In pre-fusion state, G2 homotrimers bind G1 homotrimers via ionic interactions. Part of the GP complex (GP-C) together with glycoprotein G1 and the stable signal peptide. Acidification in the endosome triggers rearrangements, which ultimately leads to a 6 helix bundle formed by the two heptad repeat domains (HR1 and HR2) in post-fusion state. The GP-complex interacts with protein Z, which interacts with ribonucleocapsid; these interactions may induce virion budding. In terms of processing, specific enzymatic cleavages in vivo yield mature proteins. GP-C polyprotein is cleaved in the endoplasmic reticulum by the host protease MBTPS1. Only cleaved glycoprotein is incorporated into virions. Post-translationally, the SSP remains stably associated with the GP complex following cleavage by signal peptidase and plays crucial roles in the trafficking of GP through the secretory pathway. Myristoylation is necessary for GP2-mediated fusion activity.

It is found in the virion membrane. The protein resides in the host endoplasmic reticulum membrane. It localises to the host Golgi apparatus membrane. Its subcellular location is the host cell membrane. In terms of biological role, functions as a cleaved signal peptide that is retained as the third component of the GP complex (GP-C). Helps to stabilize the spike complex in its native conformation. The SSP is required for efficient glycoprotein expression, post-translational maturation cleavage of G1 and G2, glycoprotein transport to the cell surface plasma membrane, formation of infectious virus particles, and acid pH-dependent glycoprotein-mediated cell fusion. Its function is as follows. Forms the virion spikes together with glycoprotein G2. The glycoprotein spike trimers are connected to the underlying matrix. Mediates virus attachment to host receptor alpha-dystroglycan DAG1. This attachment induces virion internalization predominantly through clathrin- and caveolin-independent endocytosis. Forms the virion spikes together with glycoprotein G1. The glycoprotein spike trimers are connected to the underlying matrix. Class I viral fusion protein that directs fusion of viral and host endosomal membranes, leading to delivery of the nucleocapsid into the cytoplasm. Membrane fusion is mediated by irreversible conformational changes induced by acidification. The sequence is that of Pre-glycoprotein polyprotein GP complex from Latino mammarenavirus (isolate Rat/Bolivia/MARU 1924/1965) (LATV).